Consider the following 325-residue polypeptide: Elongation factor P--(R)-beta-lysine ligase (325 aa).

76–78 provides a ligand contact to substrate; that stretch reads SPE. Residues 100–102 and asparagine 109 contribute to the ATP site; that span reads RNE. Residue tyrosine 118 coordinates substrate. 244-245 is a binding site for ATP; that stretch reads EL. Glutamate 251 serves as a coordination point for substrate. Glycine 300 lines the ATP pocket.

This sequence belongs to the class-II aminoacyl-tRNA synthetase family. EpmA subfamily. As to quaternary structure, homodimer.

It carries out the reaction D-beta-lysine + L-lysyl-[protein] + ATP = N(6)-((3R)-3,6-diaminohexanoyl)-L-lysyl-[protein] + AMP + diphosphate + H(+). Its function is as follows. With EpmB is involved in the beta-lysylation step of the post-translational modification of translation elongation factor P (EF-P). Catalyzes the ATP-dependent activation of (R)-beta-lysine produced by EpmB, forming a lysyl-adenylate, from which the beta-lysyl moiety is then transferred to the epsilon-amino group of a conserved specific lysine residue in EF-P. The chain is Elongation factor P--(R)-beta-lysine ligase from Enterobacter sp. (strain 638).